A 1196-amino-acid chain; its full sequence is Probable cation-transporting ATPase 13A4 (1196 aa).

At 1–31 the chain is on the cytoplasmic side; it reads MGHFEKGQHALLNEGEENEMEIFGYRTQGCR. The stretch at 32–52 is an intramembrane region; the sequence is KSLCLAGSIFSFGILPLVFYW. At 53–197 the chain is on the cytoplasmic side; it reads RPAWHVWAHC…DVEVTPIWKL (145 aa). Residues 198–218 traverse the membrane as a helical segment; that stretch reads LIKEVLNPFYIFQLFSVCLWF. Residues 219-223 are Lumenal-facing; sequence SEDYK. A helical transmembrane segment spans residues 224–244; it reads EYAFAIIIMSIISISLTVYDL. Residues 245 to 400 lie on the Cytoplasmic side of the membrane; that stretch reads REQSVKLHHL…NFQLYRDAIR (156 aa). A helical membrane pass occupies residues 401–421; sequence FLLCLVGTATIGMIYTLCVYV. At 422-436 the chain is on the lumenal side; the sequence is LSGEPPEEVVRKALD. The chain crosses the membrane as a helical span at residues 437–457; the sequence is VITIAVPPALPAALTTGIIYA. Residues 458–900 are Cytoplasmic-facing; sequence QRRLKKRGIF…KEGRAALVTS (443 aa). Residue aspartate 486 is the 4-aspartylphosphate intermediate of the active site. Positions 848 and 852 each coordinate Mg(2+). The helical transmembrane segment at 901–921 threads the bilayer; sequence FCMFKYMALYSMIQYVGVLLL. Residues 922–932 are Lumenal-facing; the sequence is YWETNSLSNYQ. A helical membrane pass occupies residues 933-953; it reads FLFQDLAITTLIGVTMNLNGA. Topologically, residues 954–972 are cytoplasmic; the sequence is YPKLVPFRPAGRLISPPLL. Residues 973–993 form a helical membrane-spanning segment; it reads LSVIFNILLSLAMHIAGFILV. At 994-1035 the chain is on the lumenal side; the sequence is QRQPWYSVEIHSACTVQNESISELTMSPTAPEKMESNSTFTS. A helical membrane pass occupies residues 1036–1056; it reads FENTTVWFLGTINCITVALVF. Residues 1057-1070 are Cytoplasmic-facing; that stretch reads SKGKPFRQPTYTNY. Residues 1071–1091 traverse the membrane as a helical segment; it reads IFVLVLIIQLGVCLFILFADI. Over 1092-1109 the chain is Lumenal; the sequence is PELYRRLDLLCTPVLWRA. A helical membrane pass occupies residues 1110-1130; sequence SIVIMLSLNFIVSLVAEEAVI. Residues 1131-1196 are Cytoplasmic-facing; that stretch reads ENRALWMMIK…PVFESNEEQL (66 aa).

Belongs to the cation transport ATPase (P-type) (TC 3.A.3) family. Type V subfamily. Expressed in heart, placenta, liver, skeletal muscles, and pancreas. Lower levels of expression are also detected in brain, lung and kidney. Weakly expressed in the adult brain. Expression in fetal brain is higher than in adult brain, with levels similar to several other fetal tissues including spleen and skeletal muscle. In adult brain expressed at low levels in all tissues examined, including the temporal lobe and putamen. Highly expressed in the respiratory and integumentary systems.

The protein localises to the early endosome membrane. The protein resides in the late endosome membrane. It localises to the recycling endosome membrane. The catalysed reaction is ATP + H2O = ADP + phosphate + H(+). The protein is Probable cation-transporting ATPase 13A4 (ATP13A4) of Homo sapiens (Human).